Consider the following 203-residue polypeptide: Inosine triphosphate pyrophosphatase (203 aa).

An ITP-binding site is contributed by 13–18; sequence TGNAKK. Mg(2+) is bound at residue Glu-43. ITP-binding positions include Lys-55, 71 to 72, Lys-88, 147 to 150, Lys-170, and 175 to 176; these read DT, FGWD, and HR.

This sequence belongs to the HAM1 NTPase family. In terms of assembly, homodimer. Requires Mg(2+) as cofactor. Mn(2+) is required as a cofactor.

Its subcellular location is the cytoplasm. It catalyses the reaction ITP + H2O = IMP + diphosphate + H(+). The catalysed reaction is dITP + H2O = dIMP + diphosphate + H(+). It carries out the reaction XTP + H2O = XMP + diphosphate + H(+). The enzyme catalyses N(6)-hydroxy-dATP + H2O = N(6)-hydroxy-dAMP + diphosphate + H(+). Pyrophosphatase that hydrolyzes the non-canonical purine nucleotides inosine triphosphate (ITP), deoxyinosine triphosphate (dITP) as well as 2'-deoxy-N-6-hydroxylaminopurine triphosphate (dHAPTP) and xanthosine 5'-triphosphate (XTP) to their respective monophosphate derivatives. The enzyme does not distinguish between the deoxy- and ribose forms. Probably excludes non-canonical purines from RNA and DNA precursor pools, thus preventing their incorporation into RNA and DNA and avoiding chromosomal lesions. The protein is Inosine triphosphate pyrophosphatase (itpa) of Danio rerio (Zebrafish).